A 200-amino-acid polypeptide reads, in one-letter code: Small ribosomal subunit protein eS1 (200 aa).

The protein belongs to the eukaryotic ribosomal protein eS1 family.

The chain is Small ribosomal subunit protein eS1 from Thermococcus sibiricus (strain DSM 12597 / MM 739).